The primary structure comprises 546 residues: Cysteine desulfurase SufS (546 aa).

Residues 1–22 form the signal peptide; that stretch reads MLRGPRCLYIYLFFVFLPFSFC. Lysine 291 carries the N6-(pyridoxal phosphate)lysine modification. The Cysteine persulfide intermediate role is filled by cysteine 497.

Belongs to the class-V pyridoxal-phosphate-dependent aminotransferase family. Csd subfamily. Monomer. Interacts with SufE; interaction enhances cysteine desulfurase activity of SufS. The cofactor is pyridoxal 5'-phosphate. Proteolytically cleaved.

The protein resides in the plastid. The protein localises to the apicoplast. The enzyme catalyses (sulfur carrier)-H + L-cysteine = (sulfur carrier)-SH + L-alanine. The protein operates within cofactor biosynthesis; iron-sulfur cluster biosynthesis. Catalyzes sulfur activation and mobilization in sulfur mobilization (SUF) pathway for iron-sulfur (Fe-S) cluster biogenesis. Active when in complex with a partner protein SufE. Required for apicoplast maintenance. Plays a role in the development of sporozoites in oocysts in mosquitoes. May provide sulfur for MNMA-mediated tRNA modifications. The sequence is that of Cysteine desulfurase SufS from Plasmodium falciparum (isolate 3D7).